The following is a 527-amino-acid chain: T-complex protein 1 subunit delta (527 aa).

It belongs to the TCP-1 chaperonin family. In terms of assembly, heterooligomeric complex of about 850 to 900 kDa that forms two stacked rings, 12 to 16 nm in diameter.

Its subcellular location is the cytoplasm. Functionally, molecular chaperone; assists the folding of proteins upon ATP hydrolysis. Known to play a role, in vitro, in the folding of actin and tubulin. The protein is T-complex protein 1 subunit delta (CCT4) of Yarrowia lipolytica (strain CLIB 122 / E 150) (Yeast).